A 420-amino-acid polypeptide reads, in one-letter code: DNA repair protein NreA (420 aa).

Positions 413–420 (QTDIFDFA) match the PIP motif motif.

Belongs to the Nre family. Interacts with the DNA polymerase sliding clamp (PCNA) via the PIP (PCNA-interacting peptide) motif.

In terms of biological role, involved in DNA damage repair. Works together with the UvrABC proteins in repairing DNA damage resulting from exposure to the DNA damaging agent mitomycin C (MMC). The polypeptide is DNA repair protein NreA (Haloferax volcanii (strain ATCC 29605 / DSM 3757 / JCM 8879 / NBRC 14742 / NCIMB 2012 / VKM B-1768 / DS2) (Halobacterium volcanii)).